We begin with the raw amino-acid sequence, 155 residues long: RING finger protein 122 (155 aa).

Residues 40–60 (VIFGTGIFVFMLSLIFCCYFI) form a helical membrane-spanning segment. The RING-type; atypical zinc finger occupies 93–134 (CAVCLEDFKGKDELGVLPCQHAFHRKCLVKWLEVRCVCPMCN).

It is found in the golgi apparatus. The protein resides in the endoplasmic reticulum. The protein localises to the membrane. Its function is as follows. May induce necrosis and apoptosis. May play a role in cell viability. The sequence is that of RING finger protein 122 (Rnf122) from Mus musculus (Mouse).